Consider the following 657-residue polypeptide: DNA ligase (657 aa).

80-81 (SL) lines the NAD(+) pocket. Lys104 acts as the N6-AMP-lysine intermediate in catalysis. The NAD(+) site is built by Arg125, Glu159, and Lys297. Zn(2+) is bound by residues Cys386, Cys389, Cys406, and Cys411. Positions 571 to 657 (QSEQIFENLN…EWLNNGVRPE (87 aa)) constitute a BRCT domain.

Belongs to the NAD-dependent DNA ligase family. LigA subfamily. It depends on Mg(2+) as a cofactor. Mn(2+) is required as a cofactor.

The enzyme catalyses NAD(+) + (deoxyribonucleotide)n-3'-hydroxyl + 5'-phospho-(deoxyribonucleotide)m = (deoxyribonucleotide)n+m + AMP + beta-nicotinamide D-nucleotide.. Functionally, DNA ligase that catalyzes the formation of phosphodiester linkages between 5'-phosphoryl and 3'-hydroxyl groups in double-stranded DNA using NAD as a coenzyme and as the energy source for the reaction. It is essential for DNA replication and repair of damaged DNA. This chain is DNA ligase, found in Ruminiclostridium cellulolyticum (strain ATCC 35319 / DSM 5812 / JCM 6584 / H10) (Clostridium cellulolyticum).